Here is a 441-residue protein sequence, read N- to C-terminus: Thymidine phosphorylase (441 aa).

The protein belongs to the thymidine/pyrimidine-nucleoside phosphorylase family. As to quaternary structure, homodimer.

It carries out the reaction thymidine + phosphate = 2-deoxy-alpha-D-ribose 1-phosphate + thymine. The protein operates within pyrimidine metabolism; dTMP biosynthesis via salvage pathway; dTMP from thymine: step 1/2. Its function is as follows. The enzymes which catalyze the reversible phosphorolysis of pyrimidine nucleosides are involved in the degradation of these compounds and in their utilization as carbon and energy sources, or in the rescue of pyrimidine bases for nucleotide synthesis. In Chromobacterium violaceum (strain ATCC 12472 / DSM 30191 / JCM 1249 / CCUG 213 / NBRC 12614 / NCIMB 9131 / NCTC 9757 / MK), this protein is Thymidine phosphorylase.